We begin with the raw amino-acid sequence, 117 residues long: MGWSCIMLFLAATATGVHFQVQLQQPGAELVKPGASVKLSSKASGYTFTSYWMHWVKQRPGRGLEWIGRIDPNSGGTKYNEKFKSKATLTVDKPSSTAYMQLSSLTSEDSAVYYCAR.

An N-terminal signal peptide occupies residues 1 to 19 (MGWSCIMLFLAATATGVHF). A framework-1 region spans residues 20-49 (QVQLQQPGAELVKPGASVKLSSKASGYTFT). Residues 50-54 (SYWMH) are complementarity-determining-1. The tract at residues 55-68 (WVKQRPGRGLEWIG) is framework-2. Residues 69 to 85 (RIDPNSGGTKYNEKFKS) form a complementarity-determining-2 region. The tract at residues 86 to 117 (KATLTVDKPSSTAYMQLSSLTSEDSAVYYCAR) is framework-3.

The sequence is that of Ig heavy chain V region 1-62-3 (Ighv1-62-3) from Mus musculus (Mouse).